The following is a 585-amino-acid chain: MRKTKIVCTIGPASESEEMIEKLINAGMNVARLNFSHGSHEEHKGRIDTIRKVAKRLDKIVAILLDTKGPEIRTHNMKDGIIELERGNEVIVSMNEVEGTPEKFSVTYENLINDVQVGSYILLDDGLIELQVKDIDHAKKEVKCDILNSGELKNKKGVNLPGVRVSLPGITEKDAEDIRFGIKENVDFIAASFVRRPSDVLEIREILEEQKANISVFPKIENQEGIDNIAEILEVSDGLMVARGDMGVEIPPEKVPMVQKDLIRQCNKLGKPVITATQMLDSMQRNPRATRAEASDVANAIYDGTDAVMLSGETAAGLYPEEAVKTMRNIAVSAEAAQDYKKLLSDRTKLVETSLVNAIGISVAHTALNLNVKAIVAATESGSTARTISKYRPHSDIIAVTPSEETARQCSIVWGVQPVVKKGRKSTDALLNNAVATAVETGRVTNGDLIIITAGVPTGETGTTNMMKIHLVGDEIANGQGIGRGSVVGTTLVAETVKDLEGKDLSDKVIVTNSIDETFVPYVEKALGLITEENGITSPSAIVGLEKGIPTVVGVEKAVKNISNNMLVTIDAAQGKIFEGYANVL.

Substrate is bound at residue arginine 32. K(+)-binding residues include asparagine 34, serine 36, aspartate 66, and threonine 67. 34–37 (NFSH) contributes to the ATP binding site. 2 residues coordinate ATP: arginine 73 and lysine 156. Glutamate 221 contacts Mg(2+). Substrate contacts are provided by glycine 244, aspartate 245, and threonine 277. Aspartate 245 contacts Mg(2+).

The protein belongs to the pyruvate kinase family. It in the C-terminal section; belongs to the PEP-utilizing enzyme family. Requires Mg(2+) as cofactor. K(+) serves as cofactor.

It carries out the reaction pyruvate + ATP = phosphoenolpyruvate + ADP + H(+). Its pathway is carbohydrate degradation; glycolysis; pyruvate from D-glyceraldehyde 3-phosphate: step 5/5. The sequence is that of Pyruvate kinase (pyk) from Staphylococcus aureus (strain bovine RF122 / ET3-1).